The primary structure comprises 312 residues: Formimidoylglutamase (312 aa).

Mn(2+) contacts are provided by histidine 128, aspartate 153, histidine 155, aspartate 157, aspartate 240, and aspartate 242.

Belongs to the arginase family. Mn(2+) serves as cofactor.

It carries out the reaction N-formimidoyl-L-glutamate + H2O = formamide + L-glutamate. Its pathway is amino-acid degradation; L-histidine degradation into L-glutamate; L-glutamate from N-formimidoyl-L-glutamate (hydrolase route): step 1/1. Its function is as follows. Catalyzes the conversion of N-formimidoyl-L-glutamate to L-glutamate and formamide. The protein is Formimidoylglutamase of Enterobacter sp. (strain 638).